We begin with the raw amino-acid sequence, 142 residues long: Galactose-6-phosphate isomerase subunit LacA (142 aa).

The protein belongs to the LacAB/RpiB family. In terms of assembly, heteromultimeric protein consisting of LacA and LacB.

It catalyses the reaction aldehydo-D-galactose 6-phosphate = keto-D-tagatose 6-phosphate. It functions in the pathway carbohydrate metabolism; D-galactose 6-phosphate degradation; D-tagatose 6-phosphate from D-galactose 6-phosphate: step 1/1. The polypeptide is Galactose-6-phosphate isomerase subunit LacA (Streptococcus mutans serotype c (strain ATCC 700610 / UA159)).